A 4265-amino-acid chain; its full sequence is Dynein axonemal heavy chain 1 (4265 aa).

Residues 1-88 (MEQPNSKGYS…KSPLTGTDKK (88 aa)) are disordered. A stem region spans residues 1–1542 (MEQPNSKGYS…YIRAVNAEFI (1542 aa)). Residues 60–69 (PHLPLPPAPP) show a composition bias toward pro residues. AAA stretches follow at residues 1543 to 1764 (YGYE…VISA), 1824 to 2057 (EAIR…SSVK), 2189 to 2449 (TMVP…VFQG), and 2547 to 2799 (DYNQ…LTRH). The short motif at 1581–1588 (GPAGTGKT) is the GPAGTGKT motif element. An ATP-binding site is contributed by 1581–1588 (GPAGTGKT). The short motif at 1631-1637 (CFDEFNR) is the CFDEFNR motif element. Residues 1862-1869 (GPTGSGKS), 2227-2234 (GPTGTGKT), and 2586-2593 (GVGGSGRS) contribute to the ATP site. The interval 2814-3112 (FSILIGQKKL…EELELKCEQC (299 aa)) is stalk. Residues 3074-3122 (LDEAKQRLREVEDGIATMQAKYRECITKKEELELKCEQCEQRLGRAGKL) are a coiled coil. AAA stretches follow at residues 3197–3427 (LGNP…EIQA) and 3640–3859 (MQDF…QLKM).

Belongs to the dynein heavy chain family. As to quaternary structure, consists of at least two heavy chains and a number of intermediate and light chains. As to expression, expressed primarily in trachea and testis, 2 tissues containing axonemal structures. Also expressed in brain.

It is found in the cytoplasm. The protein localises to the cytoskeleton. Its subcellular location is the cilium axoneme. It localises to the cell projection. The protein resides in the cilium. It is found in the flagellum. In terms of biological role, force generating protein of cilia required for sperm flagellum motility. Produces force towards the minus ends of microtubules. Dynein has ATPase activity; the force-producing power stroke is thought to occur on release of ADP. Required in spermatozoa for the formation of the inner dynein arms and biogenesis of the axoneme. In Homo sapiens (Human), this protein is Dynein axonemal heavy chain 1.